We begin with the raw amino-acid sequence, 300 residues long: Pantoate kinase (300 aa).

Belongs to the GHMP kinase family. PoK subfamily. As to quaternary structure, homodimer.

The enzyme catalyses (R)-pantoate + ATP = (R)-4-phosphopantoate + ADP + H(+). It participates in cofactor biosynthesis; coenzyme A biosynthesis. Moderately stimulated in the presence of potassium cations. Inhibited by increasing concentrations of pantoate. Activity is not affected by CoA/acetyl-CoA. Functionally, phosphorylates (R)-pantoate to form (R)-4-phosphopantoate in the CoA biosynthesis pathway. Displays broad nucleotide specificity and utilizes ATP, GTP, UTP, and CTP with comparable catalytic efficiencies. This is Pantoate kinase from Thermococcus kodakarensis (strain ATCC BAA-918 / JCM 12380 / KOD1) (Pyrococcus kodakaraensis (strain KOD1)).